Reading from the N-terminus, the 355-residue chain is Glycerol-3-phosphate dehydrogenase [NAD(P)+] (355 aa).

NADPH contacts are provided by Ser14, Trp15, Arg35, and Lys117. Residues Lys117, Gly147, and Ser149 each coordinate sn-glycerol 3-phosphate. Residue Ala151 participates in NADPH binding. 5 residues coordinate sn-glycerol 3-phosphate: Lys202, Asp255, Ser265, Arg266, and Asn267. The active-site Proton acceptor is the Lys202. Position 266 (Arg266) interacts with NADPH. Residues Ile290 and Glu292 each coordinate NADPH.

The protein belongs to the NAD-dependent glycerol-3-phosphate dehydrogenase family.

Its subcellular location is the cytoplasm. The enzyme catalyses sn-glycerol 3-phosphate + NAD(+) = dihydroxyacetone phosphate + NADH + H(+). It carries out the reaction sn-glycerol 3-phosphate + NADP(+) = dihydroxyacetone phosphate + NADPH + H(+). Its pathway is membrane lipid metabolism; glycerophospholipid metabolism. Its function is as follows. Catalyzes the reduction of the glycolytic intermediate dihydroxyacetone phosphate (DHAP) to sn-glycerol 3-phosphate (G3P), the key precursor for phospholipid synthesis. The protein is Glycerol-3-phosphate dehydrogenase [NAD(P)+] of Lawsonia intracellularis (strain PHE/MN1-00).